The following is a 518-amino-acid chain: Light-independent protochlorophyllide reductase subunit B (518 aa).

[4Fe-4S] cluster is bound at residue Asp36. Asp299 (proton donor) is an active-site residue. Residue 434–435 participates in substrate binding; that stretch reads GM.

Belongs to the ChlB/BchB/BchZ family. Protochlorophyllide reductase is composed of three subunits; ChlL, ChlN and ChlB. Forms a heterotetramer of two ChlB and two ChlN subunits. It depends on [4Fe-4S] cluster as a cofactor.

The protein localises to the plastid. It localises to the chloroplast. The enzyme catalyses chlorophyllide a + oxidized 2[4Fe-4S]-[ferredoxin] + 2 ADP + 2 phosphate = protochlorophyllide a + reduced 2[4Fe-4S]-[ferredoxin] + 2 ATP + 2 H2O. Its pathway is porphyrin-containing compound metabolism; chlorophyll biosynthesis (light-independent). In terms of biological role, component of the dark-operative protochlorophyllide reductase (DPOR) that uses Mg-ATP and reduced ferredoxin to reduce ring D of protochlorophyllide (Pchlide) to form chlorophyllide a (Chlide). This reaction is light-independent. The NB-protein (ChlN-ChlB) is the catalytic component of the complex. The chain is Light-independent protochlorophyllide reductase subunit B from Adiantum capillus-veneris (Maidenhair fern).